The sequence spans 303 residues: Polyisoprenyl-teichoic acid--peptidoglycan teichoic acid transferase TagU (303 aa).

Over 1–4 (MKKK) the chain is Cytoplasmic. Residues 5–25 (ILFWVLGILGVLIIGGGIYAY) form a helical; Signal-anchor for type II membrane protein membrane-spanning segment. Residues 26–303 (NVYSSVSNTL…KLRTHLEVTK (278 aa)) lie on the Extracellular side of the membrane.

Belongs to the LytR/CpsA/Psr (LCP) family.

It is found in the cell membrane. It functions in the pathway cell wall biogenesis. In terms of biological role, may catalyze the final step in cell wall teichoic acid biosynthesis, the transfer of the anionic cell wall polymers (APs) from their lipid-linked precursor to the cell wall peptidoglycan (PG). This is Polyisoprenyl-teichoic acid--peptidoglycan teichoic acid transferase TagU from Bacillus cereus (strain ZK / E33L).